A 178-amino-acid polypeptide reads, in one-letter code: Protein-export protein SecB (178 aa).

Positions M1–M13 are enriched in acidic residues. The interval M1 to R25 is disordered.

The protein belongs to the SecB family. Homotetramer, a dimer of dimers. One homotetramer interacts with 1 SecA dimer.

Its subcellular location is the cytoplasm. Its function is as follows. One of the proteins required for the normal export of preproteins out of the cell cytoplasm. It is a molecular chaperone that binds to a subset of precursor proteins, maintaining them in a translocation-competent state. It also specifically binds to its receptor SecA. The sequence is that of Protein-export protein SecB from Erythrobacter litoralis (strain HTCC2594).